The sequence spans 234 residues: Protein UL20 homolog (234 aa).

Transmembrane regions (helical) follow at residues 82 to 102 (VVLFGLSTFVLRPSCCLIFLF), 112 to 132 (FLILGTTITAFFYGTLMLEMY), 153 to 173 (IGALSMLGPIIFVAISYNMIF), and 191 to 211 (TSGFVIYLVMIASLAYSITSI).

It belongs to the alphaherpesvirinae UL20 family. Interacts with gK (via N-terminus); this interaction plays a role in the coordinate transport of UL20 and gK to the trans-Golgi network (TGN), and is required for their cell surface expression. Interacts with gB.

Its subcellular location is the virion. It is found in the host cell membrane. The protein resides in the host endosome membrane. The protein localises to the host Golgi apparatus membrane. It localises to the host nucleus membrane. Plays an essential role in egress of virus particles from the nucleus, cytoplasmic envelopment and virus-induced cell fusion. Forms a functional protein complex with gK and this interaction is absolutely essential for their coordinate intracellular transport, gK glycosylation, expression on host cell surface, and function. Together, they modulate gB-mediated virus-induced cell fusion and virion egress and therefore actively participate in these processes. This is Protein UL20 homolog (MDV032) from Gallid herpesvirus 2 (strain Chicken/Md5/ATCC VR-987) (GaHV-2).